We begin with the raw amino-acid sequence, 156 residues long: Small ribosomal subunit protein uS7 (156 aa).

Belongs to the universal ribosomal protein uS7 family. In terms of assembly, part of the 30S ribosomal subunit. Contacts proteins S9 and S11.

Its function is as follows. One of the primary rRNA binding proteins, it binds directly to 16S rRNA where it nucleates assembly of the head domain of the 30S subunit. Is located at the subunit interface close to the decoding center, probably blocks exit of the E-site tRNA. In Methylorubrum populi (strain ATCC BAA-705 / NCIMB 13946 / BJ001) (Methylobacterium populi), this protein is Small ribosomal subunit protein uS7.